We begin with the raw amino-acid sequence, 137 residues long: Large ribosomal subunit protein uL16 (137 aa).

The segment covering 1–16 (MLQPKRTKFRKVHTGR) has biased composition (basic residues). The disordered stretch occupies residues 1 to 22 (MLQPKRTKFRKVHTGRNRGLAQ).

This sequence belongs to the universal ribosomal protein uL16 family. In terms of assembly, part of the 50S ribosomal subunit.

Its function is as follows. Binds 23S rRNA and is also seen to make contacts with the A and possibly P site tRNAs. This chain is Large ribosomal subunit protein uL16, found in Idiomarina loihiensis (strain ATCC BAA-735 / DSM 15497 / L2-TR).